The sequence spans 479 residues: Aspartyl/glutamyl-tRNA(Asn/Gln) amidotransferase subunit B (479 aa).

It belongs to the GatB/GatE family. GatB subfamily. Heterotrimer of A, B and C subunits.

The catalysed reaction is L-glutamyl-tRNA(Gln) + L-glutamine + ATP + H2O = L-glutaminyl-tRNA(Gln) + L-glutamate + ADP + phosphate + H(+). It catalyses the reaction L-aspartyl-tRNA(Asn) + L-glutamine + ATP + H2O = L-asparaginyl-tRNA(Asn) + L-glutamate + ADP + phosphate + 2 H(+). Allows the formation of correctly charged Asn-tRNA(Asn) or Gln-tRNA(Gln) through the transamidation of misacylated Asp-tRNA(Asn) or Glu-tRNA(Gln) in organisms which lack either or both of asparaginyl-tRNA or glutaminyl-tRNA synthetases. The reaction takes place in the presence of glutamine and ATP through an activated phospho-Asp-tRNA(Asn) or phospho-Glu-tRNA(Gln). This is Aspartyl/glutamyl-tRNA(Asn/Gln) amidotransferase subunit B from Geotalea uraniireducens (strain Rf4) (Geobacter uraniireducens).